Reading from the N-terminus, the 304-residue chain is MIRQRTLKNMIWGTGIGLHSGKKVYIGLRPAPVNTGIVFHRSDIEGGAWIKADPLHVVDTRLSTNIGDGHIRVGTVEHLMSALAGLGIDNAYVDLDGPEVPIMDGSAAPFVFLIQCAGIEEQNAPKRFIRITKPLKAEDGDRWVQLEPFEGFKVSFAIDFDHPVMKNGGQEVTVDFARTSYLKEVARARTFGFMREVEALRRMGLALGGNLDNAIVVDDYRVLNEEGLRYTNEFVRHKVLDSIGDLYLLGHPLVGHFSGHKAGHALNNSLLRALLLRQDAWEFVDYAERRAPFSFADTLVTASA.

His-78, His-237, and Asp-241 together coordinate Zn(2+). The active-site Proton donor is the His-264.

It belongs to the LpxC family. It depends on Zn(2+) as a cofactor.

The catalysed reaction is a UDP-3-O-[(3R)-3-hydroxyacyl]-N-acetyl-alpha-D-glucosamine + H2O = a UDP-3-O-[(3R)-3-hydroxyacyl]-alpha-D-glucosamine + acetate. It functions in the pathway glycolipid biosynthesis; lipid IV(A) biosynthesis; lipid IV(A) from (3R)-3-hydroxytetradecanoyl-[acyl-carrier-protein] and UDP-N-acetyl-alpha-D-glucosamine: step 2/6. In terms of biological role, catalyzes the hydrolysis of UDP-3-O-myristoyl-N-acetylglucosamine to form UDP-3-O-myristoylglucosamine and acetate, the committed step in lipid A biosynthesis. This Acidithiobacillus ferrooxidans (strain ATCC 53993 / BNL-5-31) (Leptospirillum ferrooxidans (ATCC 53993)) protein is UDP-3-O-acyl-N-acetylglucosamine deacetylase.